Reading from the N-terminus, the 131-residue chain is Large ribosomal subunit protein bL21 (131 aa).

A disordered region spans residues 111-131 (VAAATGTADARRAAHNASAKE).

This sequence belongs to the bacterial ribosomal protein bL21 family. Part of the 50S ribosomal subunit. Contacts protein L20.

Functionally, this protein binds to 23S rRNA in the presence of protein L20. The protein is Large ribosomal subunit protein bL21 of Cereibacter sphaeroides (strain ATCC 17029 / ATH 2.4.9) (Rhodobacter sphaeroides).